Consider the following 355-residue polypeptide: Anthranilate phosphoribosyltransferase (355 aa).

5-phospho-alpha-D-ribose 1-diphosphate-binding positions include Gly-91, 94–95 (GD), Thr-99, 101–104 (NIST), 119–127 (KHGNRAMSS), and Ala-131. Gly-91 provides a ligand contact to anthranilate. Ser-103 serves as a coordination point for Mg(2+). Asn-122 serves as a coordination point for anthranilate. Arg-177 is a binding site for anthranilate. 2 residues coordinate Mg(2+): Asp-234 and Glu-235.

The protein belongs to the anthranilate phosphoribosyltransferase family. Homodimer. Mg(2+) serves as cofactor.

The enzyme catalyses N-(5-phospho-beta-D-ribosyl)anthranilate + diphosphate = 5-phospho-alpha-D-ribose 1-diphosphate + anthranilate. It participates in amino-acid biosynthesis; L-tryptophan biosynthesis; L-tryptophan from chorismate: step 2/5. In terms of biological role, participates in the tryptophan-dependent indole-3-acetic acid production, which is a phytohormone released by A.brasilense. Functionally, catalyzes the transfer of the phosphoribosyl group of 5-phosphorylribose-1-pyrophosphate (PRPP) to anthranilate to yield N-(5'-phosphoribosyl)-anthranilate (PRA). The polypeptide is Anthranilate phosphoribosyltransferase (Azospirillum brasilense).